A 640-amino-acid chain; its full sequence is Pleckstrin homology-like domain family B member 3 (640 aa).

5 disordered regions span residues M1–R100, L162–R189, L241–P262, G387–S412, and R476–P504. Low complexity predominate over residues P76–S90. A coiled-coil region spans residues Q104–C327. Residues Q170–R189 are compositionally biased toward basic and acidic residues. Residues D454 to R481 adopt a coiled-coil conformation. Residues T495–P504 are compositionally biased toward pro residues. One can recognise a PH domain in the interval G532–D635.

The polypeptide is Pleckstrin homology-like domain family B member 3 (PHLDB3) (Homo sapiens (Human)).